Reading from the N-terminus, the 314-residue chain is Aryldialkylphosphatase (314 aa).

Residues histidine 22, histidine 24, and lysine 137 each coordinate Fe cation. Co(2+) is bound by residues lysine 137, histidine 170, and histidine 199. N6-carboxylysine is present on lysine 137. Aspartate 256 provides a ligand contact to Fe cation.

Belongs to the metallo-dependent hydrolases superfamily. Phosphotriesterase family. As to quaternary structure, homodimer. The cofactor is Co(2+). Fe cation serves as cofactor.

It catalyses the reaction An aryl dialkyl phosphate + H2O = dialkyl phosphate + an aryl alcohol.. Inactivated by EDTA and o-phenanthroline. Functionally, has a low paraoxonase activity. Also active, but with a lower activity, against other organo-phosphorus insecticides such as Dursban, Coumaphos, pNP-butanoate or parathion. In Saccharolobus solfataricus (strain ATCC 35092 / DSM 1617 / JCM 11322 / P2) (Sulfolobus solfataricus), this protein is Aryldialkylphosphatase (php).